Reading from the N-terminus, the 238-residue chain is RNA-free ribonuclease P (238 aa).

This sequence belongs to the HARP family.

The enzyme catalyses Endonucleolytic cleavage of RNA, removing 5'-extranucleotides from tRNA precursor.. RNA-free RNase P that catalyzes the removal of the 5'-leader sequence from pre-tRNA to produce the mature 5'-terminus. This chain is RNA-free ribonuclease P, found in Hyperthermus butylicus (strain DSM 5456 / JCM 9403 / PLM1-5).